Here is a 270-residue protein sequence, read N- to C-terminus: Transcription factor PU.1 (270 aa).

Residues 123 to 164 (SLSPAQPSSDEEEGERQSPPLEVSDGEADGLEPGPGLLPGET) form a disordered region. 2 positions are modified to phosphoserine: Ser140 and Ser146. The span at 153-164 (LEPGPGLLPGET) shows a compositional bias: low complexity. Positions 170 to 253 (IRLYQFLLDL…VKKKLTYQFS (84 aa)) form a DNA-binding region, ETS. Positions 217, 230, 233, and 243 each coordinate DNA.

The protein belongs to the ETS family. As to quaternary structure, binds DNA as a monomer. Can form homomers. Directly interacts with CEBPD/NF-IL6-beta; this interaction does not affect DNA-binding properties of each partner. Interacts with NONO/p54(nrb). Interacts with RUNX1/AML1. Interacts with GFI1; the interaction represses SPI1 transcriptional activity, hence blocks SPI1-induced macrophage differentiation of myeloid progenitor cells. Interacts with CEBPE. Interacts with IRF4/Pip and IRF8. Interacts with JUN. Interacts with RB1. Interacts with TBP. As to expression, in the bone marrow, concentrated in hematopoietic stem cell, lymphoid progenitor, myeloid lineage (granulocyte macrophage progenitors, classical dendritic cells, monocytes) and B-cell clusters. Among B-cells, predominantly expressed in pre-B1 cells. Expressed in germinal center B-cells.

The protein localises to the nucleus. With respect to regulation, transcriptional activity at macrophage-specific genes is inhibited by interaction with GFI1, which results in the inhibition of SPI1-induced macrophage differentiation of myeloid progenitor cells, but not that of the granulocyte lineage. Pioneer transcription factor, which controls hematopoietic cell fate by decompacting stem cell heterochromatin and allowing other transcription factors to enter otherwise inaccessible genomic sites. Once in open chromatin, can directly control gene expression by binding genetic regulatory elements and can also more broadly influence transcription by recruiting transcription factors, such as interferon regulatory factors (IRFs), to otherwise inaccessible genomic regions. Transcriptionally activates genes important for myeloid and lymphoid lineages, such as CSF1R. Transcriptional activation from certain promoters, possibly containing low affinity binding sites, is achieved cooperatively with other transcription factors. FCER1A transactivation is achieved in cooperation with GATA1. May be particularly important for the pro- to pre-B cell transition. Binds (via the ETS domain) onto the purine-rich DNA core sequence 5'-GAGGAA-3', also known as the PU-box. In vitro can bind RNA and interfere with pre-mRNA splicing. This chain is Transcription factor PU.1 (SPI1), found in Homo sapiens (Human).